The sequence spans 273 residues: Diadenylate cyclase (273 aa).

Helical transmembrane passes span 12–32 (LANIVDILVVWFVIYKVIMLI), 37–57 (AVQLLKGIFIIIAVKLLSGFF), and 61–81 (TVEWITDQMLTWGFLAIIIIF). The 161-residue stretch at 82-242 (QPELRRALET…GGELFRDVSE (161 aa)) folds into the DAC domain.

Belongs to the adenylate cyclase family. DacA/CdaA subfamily. In terms of assembly, probably a homodimer.

It is found in the cell membrane. The catalysed reaction is 2 ATP = 3',3'-c-di-AMP + 2 diphosphate. In terms of biological role, catalyzes the condensation of 2 ATP molecules into cyclic di-AMP (c-di-AMP), a signaling compound secreted into the host's cytosol where it triggers the cytosolic surveillance pathway (CSP), a host pathway of innate immunity characterized by expression of beta interferon (IFN-beta) and coregulated genes. Overexpression increases export of c-di-AMP. c-di-AMP is a second messenger that mediates growth, cell wall stability and virulence. The polypeptide is Diadenylate cyclase (Listeria monocytogenes serotype 1/2a (strain 10403S)).